Reading from the N-terminus, the 212-residue chain is Regulatory protein RecX (212 aa).

This sequence belongs to the RecX family.

It localises to the cytoplasm. Its function is as follows. Modulates RecA activity. The polypeptide is Regulatory protein RecX (Clostridium botulinum (strain Eklund 17B / Type B)).